The sequence spans 471 residues: Putative multidrug resistance protein MdtD (471 aa).

At 1–11 the chain is on the periplasmic side; that stretch reads MTDLPDSTRWQ. Residues 12–32 form a helical membrane-spanning segment; the sequence is LWIVAFGFFMQSLDTTIVNTA. The Cytoplasmic segment spans residues 33-48; the sequence is LPSMAQSLGESPLHMH. The helical transmembrane segment at 49-69 threads the bilayer; sequence MVIVSYVLTVAVMLPASGWLA. Residues 70–76 are Periplasmic-facing; that stretch reads DKVGVRN. The helical transmembrane segment at 77–97 threads the bilayer; that stretch reads IFFTAIVLFTLGSLFCALSGT. The Cytoplasmic segment spans residues 98–101; the sequence is LNEL. The helical transmembrane segment at 102 to 124 threads the bilayer; sequence LLARALQGVGGAMMVPVGRLTVM. The Periplasmic segment spans residues 125 to 137; the sequence is KIVPREQYMAAMT. A helical membrane pass occupies residues 138 to 158; sequence FVTLPGQVGPLLGPALGGLLV. The Cytoplasmic portion of the chain corresponds to 159–164; that stretch reads EYASWH. A helical membrane pass occupies residues 165 to 185; sequence WIFLINIPVGIIGAIATLMLM. Residues 186 to 196 are Periplasmic-facing; the sequence is PNYTMQTRRFD. The helical transmembrane segment at 197–217 threads the bilayer; that stretch reads LSGFLLLAVGMAVLTLALDGS. Residues 218 to 224 lie on the Cytoplasmic side of the membrane; the sequence is KGTGFSP. The chain crosses the membrane as a helical span at residues 225-245; sequence LAIAGLVAVGVVALVLYLLHA. The Periplasmic segment spans residues 246 to 262; that stretch reads QNNNRALFSLKLFRTRT. The chain crosses the membrane as a helical span at residues 263–283; the sequence is FSLGLAGSFAGRIGSGMLPFM. At 284–285 the chain is on the cytoplasmic side; sequence TP. Residues 286–306 traverse the membrane as a helical segment; the sequence is VFLQIGLGFSPFHAGLMMIPM. The Periplasmic portion of the chain corresponds to 307-341; the sequence is VLGSMGMKRIVVQVVNRFGYRRVLVATTLGLSLVT. A helical transmembrane segment spans residues 342–362; it reads LLFMTTALLGWYYVLPFVLFL. At 363 to 395 the chain is on the cytoplasmic side; it reads QGMVNSTRFSSMNTLTLKDLPDNLASSGNSLLS. The helical transmembrane segment at 396-416 threads the bilayer; the sequence is MIMQLSMSIGVTIAGLLLGLF. Over 417–430 the chain is Periplasmic; it reads GSQHVSVDSGTTQT. A helical membrane pass occupies residues 431-451; sequence VFMYTWLSMAFIIALPAFVFA. The Cytoplasmic segment spans residues 452-471; that stretch reads RVPSDTHQNVAISRRKRSAQ.

Belongs to the major facilitator superfamily. TCR/Tet family.

The protein resides in the cell inner membrane. This chain is Putative multidrug resistance protein MdtD, found in Escherichia coli O45:K1 (strain S88 / ExPEC).